A 287-amino-acid chain; its full sequence is ATP synthase gamma chain (287 aa).

This sequence belongs to the ATPase gamma chain family. F-type ATPases have 2 components, CF(1) - the catalytic core - and CF(0) - the membrane proton channel. CF(1) has five subunits: alpha(3), beta(3), gamma(1), delta(1), epsilon(1). CF(0) has three main subunits: a, b and c.

The protein localises to the cell inner membrane. Functionally, produces ATP from ADP in the presence of a proton gradient across the membrane. The gamma chain is believed to be important in regulating ATPase activity and the flow of protons through the CF(0) complex. This is ATP synthase gamma chain from Alkalilimnicola ehrlichii (strain ATCC BAA-1101 / DSM 17681 / MLHE-1).